The sequence spans 219 residues: 2-hydroxy-3-keto-5-methylthiopentenyl-1-phosphate phosphatase (219 aa).

Belongs to the HAD-like hydrolase superfamily. MtnX family.

It catalyses the reaction 2-hydroxy-5-methylsulfanyl-3-oxopent-1-enyl phosphate + H2O = 1,2-dihydroxy-5-(methylsulfanyl)pent-1-en-3-one + phosphate. It participates in amino-acid biosynthesis; L-methionine biosynthesis via salvage pathway; L-methionine from S-methyl-5-thio-alpha-D-ribose 1-phosphate: step 4/6. Dephosphorylates 2-hydroxy-3-keto-5-methylthiopentenyl-1-phosphate (HK-MTPenyl-1-P) yielding 1,2-dihydroxy-3-keto-5-methylthiopentene (DHK-MTPene). This chain is 2-hydroxy-3-keto-5-methylthiopentenyl-1-phosphate phosphatase, found in Bacillus cereus (strain AH187).